Here is a 350-residue protein sequence, read N- to C-terminus: Transmembrane protein 185A (350 aa).

A run of 7 helical transmembrane segments spans residues 16 to 36, 41 to 61, 81 to 101, 111 to 131, 177 to 197, 211 to 231, and 240 to 260; these read LIYACLLLFSVLLALRLDGII, WAVFAPIWLWKLMVIVGASVG, FKAMLIAVGIHLLLLMFEVLV, FWLLVFMPLFFVSPVSVAACV, ILMSFLCLVVLYYIVWSVLFL, ITMALSWMTIVVPLLTFEILL, and AFSCIPIFVPLWLSLITLMAT. The interval 298–350 is mediates interaction with MAP1B; the sequence is DLHHEDNEETEETPVPEPPKIAPMFRKKARVVITQSPGKYVLPPPKLNIEMPD.

The protein belongs to the TMEM185 family. As to quaternary structure, interacts with MAP1B.

The protein resides in the cell projection. Its subcellular location is the dendrite. It is found in the membrane. The sequence is that of Transmembrane protein 185A (TMEM185A) from Homo sapiens (Human).